A 482-amino-acid polypeptide reads, in one-letter code: MFS-type transporter traF (482 aa).

Residues Met1 to Glu14 show a composition bias toward polar residues. The disordered stretch occupies residues Met1–Leu22. Residues Asn15 and Asn45 are each glycosylated (N-linked (GlcNAc...) asparagine). Transmembrane regions (helical) follow at residues Val52–Met72, Leu89–Gly109, Val125–Phe145, Phe149–Leu169, Gly176–Val196, Trp209–Cys229, Pro275–Phe295, Ile312–Ile332, and Leu354–Thr374. N-linked (GlcNAc...) asparagine glycosylation occurs at Asn376. Helical transmembrane passes span Leu379–Phe399, Leu427–Trp447, and Ala448–Ile468.

The protein belongs to the major facilitator superfamily. CAR1 family.

Its subcellular location is the membrane. Its function is as follows. MFS-type transporter; part of the tra gene cluster that produces terrestric acid. The clavatol biosynthesis cluster cla and the terrestric acid cluster tra are both involved in the production of peniphenones and penilactones. This chain is MFS-type transporter traF, found in Penicillium crustosum (Blue mold fungus).